We begin with the raw amino-acid sequence, 396 residues long: Inositol-tetrakisphosphate 1-kinase (396 aa).

Lys18 is a binding site for 1D-myo-inositol 1,3,4-trisphosphate. The ATP site is built by Arg106 and Lys157. The ATP-grasp domain maps to 117 to 325; that stretch reads ETYMQDERIC…ITTILQRPDQ (209 aa). His167 and Lys199 together coordinate 1D-myo-inositol 1,3,4-trisphosphate. ATP-binding positions include 188–199, Ser214, Ser232, and Ser236; that span reads QSFISHNAVLYK. Positions 281, 295, and 297 each coordinate Mg(2+). A 1D-myo-inositol 1,3,4-trisphosphate-binding site is contributed by Asn297.

Belongs to the ITPK1 family. In terms of assembly, monomer. The cofactor is Mg(2+).

It catalyses the reaction 1D-myo-inositol 3,4,5,6-tetrakisphosphate + ATP = 1D-myo-inositol 1,3,4,5,6-pentakisphosphate + ADP + H(+). The catalysed reaction is 1D-myo-inositol 1,3,4-trisphosphate + ATP = 1D-myo-inositol 1,3,4,5-tetrakisphosphate + ADP + H(+). The enzyme catalyses 1D-myo-inositol 1,3,4-trisphosphate + ATP = 1D-myo-inositol 1,3,4,6-tetrakisphosphate + ADP + H(+). It carries out the reaction 1D-myo-inositol 3,4,6-trisphosphate + ATP = 1D-myo-inositol 1,3,4,6-tetrakisphosphate + ADP + H(+). It catalyses the reaction 1D-myo-inositol 1,3,4-trisphosphate + 1D-myo-inositol 1,3,4,5,6-pentakisphosphate = 1D-myo-inositol 3,4,5,6-tetrakisphosphate + 1D-myo-inositol 1,3,4,6-tetrakisphosphate. The catalysed reaction is 1D-myo-inositol 1,3,4-trisphosphate + 1D-myo-inositol 1,3,4,5,6-pentakisphosphate = 1D-myo-inositol 3,4,5,6-tetrakisphosphate + 1D-myo-inositol 1,3,4,5-tetrakisphosphate. Kinase that can phosphorylate various inositol polyphosphate such as Ins(3,4,5,6)P4 or Ins(1,3,4)P3. Phosphorylates Ins(3,4,5,6)P4 at position 1 to form Ins(1,3,4,5,6)P5. This reaction is thought to have regulatory importance, since Ins(3,4,5,6)P4 is an inhibitor of plasma membrane Ca(2+)-activated Cl(-) channels, while Ins(1,3,4,5,6)P5 is not. Also phosphorylates Ins(1,3,4)P3 on O-5 and O-6 to form Ins(1,3,4,6)P4, an essential molecule in the hexakisphosphate (InsP6) pathway. Also acts as an inositol polyphosphate phosphatase that dephosphorylates Ins(1,3,4,5)P4 and Ins(1,3,4,6)P4 to Ins(1,3,4)P3, and Ins(1,3,4,5,6)P5 to Ins(3,4,5,6)P4. May also act as an isomerase that interconverts the inositol tetrakisphosphate isomers Ins(1,3,4,5)P4 and Ins(1,3,4,6)P4 in the presence of ADP and magnesium. Probably acts as the rate-limiting enzyme of the InsP6 pathway. Modifies TNF-alpha-induced apoptosis by interfering with the activation of TNFRSF1A-associated death domain. Plays an important role in MLKL-mediated necroptosis. Produces highly phosphorylated inositol phosphates such as inositolhexakisphosphate (InsP6) which bind to MLKL mediating the release of an N-terminal auto-inhibitory region leading to its activation. Essential for activated phospho-MLKL to oligomerize and localize to the cell membrane during necroptosis. This Xenopus laevis (African clawed frog) protein is Inositol-tetrakisphosphate 1-kinase (itpk1).